The sequence spans 161 residues: Nucleotide-binding protein Nmul_A1044 (161 aa).

Belongs to the YajQ family.

Functionally, nucleotide-binding protein. The chain is Nucleotide-binding protein Nmul_A1044 from Nitrosospira multiformis (strain ATCC 25196 / NCIMB 11849 / C 71).